Reading from the N-terminus, the 377-residue chain is Probable dehydratase NIT22 (377 aa).

NADP(+) is bound by residues K101 and R196. The tract at residues 220–243 (ERGPKMNEHVPSTPPRRPDAVSSF) is disordered. Residues 233-332 (PPRRPDAVSS…ILMWDMGLCK (100 aa)) enclose the MaoC-like domain. NADP(+) is bound by residues T265 and I287.

Belongs to the short-chain dehydrogenases/reductases (SDR) family.

It participates in siderophore biosynthesis. Functionally, probable dehydratase; part of the gene cluster that mediates the biosynthesis of hydroxamate-containing siderophores that play a critical role in virulence via intracellular iron acquisition during macrophage infection. The protein is Probable dehydratase NIT22 of Ajellomyces capsulatus (Darling's disease fungus).